We begin with the raw amino-acid sequence, 492 residues long: Homoserine O-acetyltransferase (492 aa).

The 308-residue stretch at 47 to 354 folds into the AB hydrolase-1 domain; the sequence is NVILVCHALT…NYGHDAFLLE (308 aa). Ser152 functions as the Nucleophile in the catalytic mechanism. Arg221 is a substrate binding site. Residues Asp315 and His348 contribute to the active site. Asp349 serves as a coordination point for substrate. CBS domains follow at residues 375-432 and 436-492; these read MKLD…FTTL and LTKN…HRCT.

It belongs to the AB hydrolase superfamily. MetX family. As to quaternary structure, homodimer.

The protein localises to the cytoplasm. The catalysed reaction is L-homoserine + acetyl-CoA = O-acetyl-L-homoserine + CoA. It participates in amino-acid biosynthesis; L-methionine biosynthesis via de novo pathway; O-acetyl-L-homoserine from L-homoserine: step 1/1. In terms of biological role, transfers an acetyl group from acetyl-CoA to L-homoserine, forming acetyl-L-homoserine. This chain is Homoserine O-acetyltransferase, found in Methanosalsum zhilinae (strain DSM 4017 / NBRC 107636 / OCM 62 / WeN5) (Methanohalophilus zhilinae).